Here is a 427-residue protein sequence, read N- to C-terminus: Adenylosuccinate synthetase (427 aa).

GTP is bound by residues Gly12–Lys18 and Gly40–Thr42. The active-site Proton acceptor is Asp13. Mg(2+)-binding residues include Asp13 and Gly40. IMP is bound by residues Asp13 to Lys16, Asn38 to His41, Thr128, Arg142, Gln223, Thr238, and Arg302. His41 functions as the Proton donor in the catalytic mechanism. A substrate-binding site is contributed by Thr298–Arg304. GTP-binding positions include Arg304, Leu330–Asp332, and Ser412–Gly414.

Belongs to the adenylosuccinate synthetase family. In terms of assembly, homodimer. Requires Mg(2+) as cofactor.

It localises to the cytoplasm. The enzyme catalyses IMP + L-aspartate + GTP = N(6)-(1,2-dicarboxyethyl)-AMP + GDP + phosphate + 2 H(+). It participates in purine metabolism; AMP biosynthesis via de novo pathway; AMP from IMP: step 1/2. In terms of biological role, plays an important role in the de novo pathway of purine nucleotide biosynthesis. Catalyzes the first committed step in the biosynthesis of AMP from IMP. The polypeptide is Adenylosuccinate synthetase (Alkaliphilus metalliredigens (strain QYMF)).